Reading from the N-terminus, the 310-residue chain is Probable L,D-transpeptidase ErfK/SrfK (310 aa).

Residues 1–21 form the signal peptide; sequence MRRVNILCSFALLFASHTSLA. One can recognise a L,D-TPase catalytic domain in the interval 96–231; the sequence is KGIVVNVAEM…VPVGTRVQII (136 aa). The active-site Proton donor/acceptor is H191. The active-site Nucleophile is C207.

This sequence belongs to the YkuD family. As to quaternary structure, interacts with DsbG.

It localises to the periplasm. It functions in the pathway cell wall biogenesis; peptidoglycan biosynthesis. Functionally, responsible, at least in part, for anchoring of the major outer membrane lipoprotein (Lpp, also known as the Braun lipoprotein) to the peptidoglycan via a meso-diaminopimelyl-L-Lys- bond on the terminal residue of Lpp. In Escherichia coli (strain K12), this protein is Probable L,D-transpeptidase ErfK/SrfK (erfK).